Here is a 284-residue protein sequence, read N- to C-terminus: MIRIPAVAGSFYEADPVRLRKQIEWSFLHDLGPKSLPSVPQNKPPQRSNRFFVVPHAGYMYSGPVAAHAYYHLSLEGSPDTVIILGPNHTGLGSYVSIWHKGKWKTPLGEVSVDDEISLELVKLTEIIDIDERAHLYEHSIEVQIPFLQYLFGQNFKIVPIVIMMQTPDVAESLAEGIYKLVSSGKKDIVVLASSDLNHYEPHDKTIEKDNLAIDEIQKLDYKGLFRVVEEKDVTACGYGPIMTVLILAKKLGKKPYVLRHATSGDTSGDKSSVVGYLSVRFGD.

Belongs to the MEMO1 family.

The chain is MEMO1 family protein Saci_0089 from Sulfolobus acidocaldarius (strain ATCC 33909 / DSM 639 / JCM 8929 / NBRC 15157 / NCIMB 11770).